A 367-amino-acid chain; its full sequence is Protein TlpB (367 aa).

Helical transmembrane passes span 15-35 (ILIS…SPYF), 53-73 (IIAP…GILI), 83-103 (IIPI…YVTF), 124-144 (IQAI…FFLL), and 153-173 (FYVV…LAPI).

The protein resides in the membrane. The sequence is that of Protein TlpB (tlpB) from Flavobacterium psychrophilum.